The chain runs to 668 residues: Threonine--tRNA ligase (668 aa).

Residues 1–61 (MSDLKIALTH…ADGDQVEPVA (61 aa)) enclose the TGS domain. The catalytic stretch occupies residues 265 to 564 (DHRKLGRDLD…LVEHYAGAFP (300 aa)). Zn(2+) contacts are provided by Cys-358, His-409, and His-541.

It belongs to the class-II aminoacyl-tRNA synthetase family. Homodimer. It depends on Zn(2+) as a cofactor.

The protein localises to the cytoplasm. The catalysed reaction is tRNA(Thr) + L-threonine + ATP = L-threonyl-tRNA(Thr) + AMP + diphosphate + H(+). Its function is as follows. Catalyzes the attachment of threonine to tRNA(Thr) in a two-step reaction: L-threonine is first activated by ATP to form Thr-AMP and then transferred to the acceptor end of tRNA(Thr). Also edits incorrectly charged L-seryl-tRNA(Thr). In Nocardioides sp. (strain ATCC BAA-499 / JS614), this protein is Threonine--tRNA ligase.